A 330-amino-acid chain; its full sequence is Membrane progestin receptor gamma (330 aa).

Residues 1–51 (MLSLKLPRLFRIDQVPQVFHEQGILFGYRHPQSSATACILSLFQMTNETLN) are Cytoplasmic-facing. A helical transmembrane segment spans residues 52–72 (IWTHLLPFWFFVWRFMTALYV). The Extracellular segment spans residues 73-81 (TDIQNDSYS). Residues 82–101 (WPMLVYMCTSCVYPLASSCA) form a helical membrane-spanning segment. Residues 102-113 (HTFSSMSKNARH) lie on the Cytoplasmic side of the membrane. The helical transmembrane segment at 114–134 (ICYFLDYGAVNLFSLGSAIAY) threads the bilayer. At 135 to 141 (SAYTFPD) the chain is on the extracellular side. Residues 142 to 162 (ALVCSTFHECYVALAVLNTIL) form a helical membrane-spanning segment. Residues 163-186 (STGLSCYSRFLELQKPRLCKLLRV) are Cytoplasmic-facing. A helical transmembrane segment spans residues 187–207 (LAFAYPYTWDSLPIFYRLFLF). The Extracellular segment spans residues 208–253 (PGESSRNEAMLYHQKHMGMTLLASFFYSAHLPERLAPGRFDYIGHS). Residues 254–274 (HQLFHVCVILATHLQMEAILL) form a helical membrane-spanning segment. Over 275-294 (DKTLRREWLLATSRPFSFPQ) the chain is Cytoplasmic. A helical membrane pass occupies residues 295-315 (IAAAMLLCIIFSLSNIIYFSA). The Extracellular portion of the chain corresponds to 316–330 (ALYRIPEPELHEKET).

The protein belongs to the ADIPOR family.

It is found in the cell membrane. Plasma membrane progesterone (P4) receptor coupled to G proteins. Seems to act through a G(i) mediated pathway. May be involved in oocyte maturation. This Mus musculus (Mouse) protein is Membrane progestin receptor gamma.